The sequence spans 511 residues: Gap junction alpha-3 protein (511 aa).

Residues Gly-2–Gln-15 lie within the membrane without spanning it. Residues Glu-16–Thr-19 are Cytoplasmic-facing. Residues Val-20–Ala-40 form a helical membrane-spanning segment. Over Ala-41–Pro-71 the chain is Extracellular. 3 disulfides stabilise this stretch: Cys-54–Cys-214, Cys-61–Cys-208, and Cys-65–Cys-203. The helical transmembrane segment at Ile-72–Tyr-92 threads the bilayer. The Cytoplasmic portion of the chain corresponds to Leu-93–Asn-174. Positions Glu-110–Val-119 are enriched in basic and acidic residues. The disordered stretch occupies residues Glu-110–Pro-143. Over residues Thr-129 to Asn-138 the composition is skewed to gly residues. The helical transmembrane segment at Ile-175–Phe-195 threads the bilayer. The Extracellular segment spans residues Glu-196 to Thr-223. Residues Ile-224 to Ile-244 form a helical membrane-spanning segment. The Cytoplasmic portion of the chain corresponds to Tyr-245–Val-511. Positions Ala-397–Val-511 are disordered. 2 stretches are compositionally biased toward low complexity: residues Ala-403–Ser-415 and Thr-440–Ser-456.

It belongs to the connexin family. A hemichannel or connexon is composed of a hexamer of connexins. A functional gap junction is formed by the apposition of two hemichannels. During early stages of lens development, interacts with the C-terminus of MIP. Detected in eye lens.

Its subcellular location is the cell membrane. The protein localises to the cell junction. It is found in the gap junction. In terms of biological role, structural component of lens fiber gap junctions. Gap junctions are dodecameric channels that connect the cytoplasm of adjoining cells. They are formed by the docking of two hexameric hemichannels, one from each cell membrane. Small molecules and ions diffuse from one cell to a neighboring cell via the central pore. In Gallus gallus (Chicken), this protein is Gap junction alpha-3 protein (GJA3).